Reading from the N-terminus, the 154-residue chain is CASP-like protein 5B2 (154 aa).

The Cytoplasmic segment spans residues 1–10 (MKKLLGGPGT). A helical membrane pass occupies residues 11 to 31 (VCGLLLRIGQCASAAASIGVM). Residues 32–42 (VSAKEFSVHTA) lie on the Extracellular side of the membrane. Residues 43-63 (FCYLIASMGLQLLWSFGLACL) traverse the membrane as a helical segment. Residues 64-77 (DVYALRGKKDLQNP) are Cytoplasmic-facing. The chain crosses the membrane as a helical span at residues 78 to 98 (ILVSLFVVGDWVTAMLSLAAA). Topologically, residues 99 to 129 (CSSAGVVVLYEKDIKYCNTQSQYPCLRYEVA) are extracellular. The helical transmembrane segment at 130-150 (VALSFVTWIQIAVSSHVTFWI) threads the bilayer. The Cytoplasmic segment spans residues 151–154 (LASV).

It belongs to the Casparian strip membrane proteins (CASP) family. As to quaternary structure, homodimer and heterodimers. Expressed in the stele of the root.

The protein localises to the cell membrane. The protein is CASP-like protein 5B2 of Arabidopsis thaliana (Mouse-ear cress).